Here is a 477-residue protein sequence, read N- to C-terminus: uncharacterized protein (477 aa).

Residues 107-129 (VNFWSLSMACASVLALLGLVYLI) traverse the membrane as a helical segment.

Its subcellular location is the membrane. This is an uncharacterized protein from Treponema pallidum (strain Nichols).